The sequence spans 381 residues: tRNA pseudouridine synthase D (381 aa).

D81 acts as the Nucleophile in catalysis. One can recognise a TRUD domain in the interval 160 to 335 (GMPNYFGSQR…TLGSRRFFWV (176 aa)).

Belongs to the pseudouridine synthase TruD family.

The enzyme catalyses uridine(13) in tRNA = pseudouridine(13) in tRNA. Functionally, responsible for synthesis of pseudouridine from uracil-13 in transfer RNAs. The chain is tRNA pseudouridine synthase D from Helicobacter pylori (strain P12).